We begin with the raw amino-acid sequence, 211 residues long: PITH domain-containing protein 1 (211 aa).

The PITH domain maps to 20 to 192 (EPPEQRGLAY…EVTICNYEAS (173 aa)). Tyr-189 is subject to Phosphotyrosine.

It belongs to the PITHD1 family. As to expression, down-regulated in primary acute myeloid leukemia (AML) patients.

The protein resides in the cytoplasm. In terms of biological role, promotes megakaryocyte differentiation by up-regulating RUNX1 expression. Regulates RUNX1 expression by activating the proximal promoter of the RUNX1 gene and by enhancing the translation activity of an internal ribosome entry site (IRES) element in the RUNX1 gene. The chain is PITH domain-containing protein 1 (PITHD1) from Homo sapiens (Human).